The following is a 63-amino-acid chain: uncharacterized protein (63 aa).

This is an uncharacterized protein from Bacillus subtilis (strain 168).